A 185-amino-acid chain; its full sequence is Elongation factor P (185 aa).

It belongs to the elongation factor P family.

The protein resides in the cytoplasm. It functions in the pathway protein biosynthesis; polypeptide chain elongation. In terms of biological role, involved in peptide bond synthesis. Stimulates efficient translation and peptide-bond synthesis on native or reconstituted 70S ribosomes in vitro. Probably functions indirectly by altering the affinity of the ribosome for aminoacyl-tRNA, thus increasing their reactivity as acceptors for peptidyl transferase. The polypeptide is Elongation factor P (Bordetella avium (strain 197N)).